We begin with the raw amino-acid sequence, 199 residues long: 5'-deoxynucleotidase Ent638_2835 (199 aa).

Substrate is bound by residues Arg-18 to Trp-19 and His-33. Residues Val-30–Tyr-142 form the HD domain. Residues His-33, His-68, and Asp-69 each contribute to the a divalent metal cation site. Substrate is bound by residues Asp-69, Asp-77 to Thr-80, and Asp-137. Asp-137 provides a ligand contact to a divalent metal cation.

It belongs to the 5DNU family. Homodimer. A divalent metal cation serves as cofactor.

The protein localises to the cytoplasm. The catalysed reaction is a 2'-deoxyribonucleoside 5'-phosphate + H2O = a 2'-deoxyribonucleoside + phosphate. Its function is as follows. Catalyzes the strictly specific dephosphorylation of 2'-deoxyribonucleoside 5'-monophosphates. In Enterobacter sp. (strain 638), this protein is 5'-deoxynucleotidase Ent638_2835.